Consider the following 434-residue polypeptide: Enolase (434 aa).

Gln-165 provides a ligand contact to (2R)-2-phosphoglycerate. Residue Glu-207 is the Proton donor of the active site. Asp-244, Glu-291, and Asp-318 together coordinate Mg(2+). (2R)-2-phosphoglycerate contacts are provided by Lys-343, Arg-372, Ser-373, and Lys-394. Lys-343 acts as the Proton acceptor in catalysis.

The protein belongs to the enolase family. Mg(2+) serves as cofactor.

The protein resides in the cytoplasm. It is found in the secreted. The protein localises to the cell surface. The catalysed reaction is (2R)-2-phosphoglycerate = phosphoenolpyruvate + H2O. It functions in the pathway carbohydrate degradation; glycolysis; pyruvate from D-glyceraldehyde 3-phosphate: step 4/5. Its function is as follows. Catalyzes the reversible conversion of 2-phosphoglycerate (2-PG) into phosphoenolpyruvate (PEP). It is essential for the degradation of carbohydrates via glycolysis. In Staphylococcus aureus (strain USA300 / TCH1516), this protein is Enolase.